The primary structure comprises 116 residues: uncharacterized protein (116 aa).

Disordered regions lie at residues 1-26 (MLLT…KSSN) and 74-116 (ENDL…KSSI). Residues 14–26 (SANSTDDSSKSSN) are compositionally biased toward low complexity. A compositionally biased stretch (basic and acidic residues) spans 74-86 (ENDLKRSKSQGRE). Residues 104–116 (NTASEIQRTKSSI) show a composition bias toward polar residues.

This is an uncharacterized protein from Saccharomyces cerevisiae (strain ATCC 204508 / S288c) (Baker's yeast).